The following is a 199-amino-acid chain: Recombination protein RecR (199 aa).

Residues 56-71 (CQVCFHLSAESTCEIC) form a C4-type zinc finger. Positions 79 to 173 (QTLCVVADSR…KVTRIAFGLP (95 aa)) constitute a Toprim domain.

Belongs to the RecR family.

In terms of biological role, may play a role in DNA repair. It seems to be involved in an RecBC-independent recombinational process of DNA repair. It may act with RecF and RecO. The polypeptide is Recombination protein RecR (Gloeothece citriformis (strain PCC 7424) (Cyanothece sp. (strain PCC 7424))).